Reading from the N-terminus, the 250-residue chain is MILSQFDQNIQPLSSAILPRHIAIIMDGNGRWARGRGKLRIVGHQAGFQAARRAVRFAVHCRFNALTLYAFSSENWTRSNTEISSLMQLFIYALNSEINNLNKNNIKLRIIGDVNRFTQELQDCIYRSEQLTSNNNGLNLNIAANYGGRWDIVQGVKKIIAQIQKGVLKPNQINENILCKYVCMNELSPVDLVIRTGGEHRISNFLLWQIAYAELFFTDVLWPDFNDIVFRRALHSFMKRDRRFGKSAFI.

The active site involves aspartate 27. Mg(2+) is bound at residue aspartate 27. Substrate contacts are provided by residues 28 to 31 (GNGR), tryptophan 32, arginine 40, histidine 44, and 72 to 74 (SSE). The active-site Proton acceptor is the asparagine 75. Residues tryptophan 76, arginine 78, and arginine 195 each contribute to the substrate site. Histidine 200 is a binding site for Mg(2+). Residue 201-203 (RIS) participates in substrate binding. A Mg(2+)-binding site is contributed by glutamate 214.

The protein belongs to the UPP synthase family. Homodimer. It depends on Mg(2+) as a cofactor.

The enzyme catalyses 8 isopentenyl diphosphate + (2E,6E)-farnesyl diphosphate = di-trans,octa-cis-undecaprenyl diphosphate + 8 diphosphate. Catalyzes the sequential condensation of isopentenyl diphosphate (IPP) with (2E,6E)-farnesyl diphosphate (E,E-FPP) to yield (2Z,6Z,10Z,14Z,18Z,22Z,26Z,30Z,34E,38E)-undecaprenyl diphosphate (di-trans,octa-cis-UPP). UPP is the precursor of glycosyl carrier lipid in the biosynthesis of bacterial cell wall polysaccharide components such as peptidoglycan and lipopolysaccharide. This is Ditrans,polycis-undecaprenyl-diphosphate synthase ((2E,6E)-farnesyl-diphosphate specific) from Blochmanniella floridana.